Reading from the N-terminus, the 584-residue chain is MTISDHPETEPKWWKEATIYQIYPASFKDSNNDGWGDLKGITSKLQYIKDLGVDAIWVCPFYDSPQQDMGYDISNYEKVWPTYGTNEDCFELIDKTHKLGMKFITDLVINHCSTEHEWFKESRSSKTNPKRDWFFWRPPKGYDAEGKPIPPNNWKSFFGGSAWTFDETTNEFYLRLFASRQVDLNWENEDCRRAIFESAVGFWLDHGVDGFRIDTAGLYSKRPGLPDSPIFDKTSKLQHPNWGSHNGPRIHEYHQELHRFMKNRVKDGREIMTVGEVAHGSDNALYTSAARYEVSEVFSFTHVEVGTSPFFRYNIVPFTLKQWKEAIASNFLFINGTDSWATTYIENHDQARSITRFADDSPKYRKISGKLLTLLECSLTGTLYVYQGQEIGQINFKEWPIEKYEDVDVKNNYEIIKKSFGKNSKEMKDFFKGIALLSRDHSRTPMPWTKDKPNAGFTGPDVKPWFLLNESFEQGINVEQESRDDDSVLNFWKRALQARKKYKELMIYGYDFQFIDLDSDQIFSFTKEYEDKTLFAALNFSGEEIEFSLPREGASLSFILGNYDDTDVSSRVLKPWEGRIYLVK.

The active-site Nucleophile is the Asp214. Glu276 acts as the Proton donor in catalysis.

Belongs to the glycosyl hydrolase 13 family.

The catalysed reaction is Hydrolysis of terminal, non-reducing (1-&gt;4)-linked alpha-D-glucose residues with release of alpha-D-glucose.. The sequence is that of Alpha-glucosidase MAL12 (MAL12) from Saccharomyces cerevisiae (strain ATCC 204508 / S288c) (Baker's yeast).